We begin with the raw amino-acid sequence, 556 residues long: Hydroxylamine reductase (556 aa).

Residues C4, C7, C19, and C26 each contribute to the [4Fe-4S] cluster site. Positions 252, 276, 320, 407, 435, 460, 494, and 496 each coordinate hybrid [4Fe-2O-2S] cluster. Position 407 is a cysteine persulfide (C407).

This sequence belongs to the HCP family. The cofactor is [4Fe-4S] cluster. Hybrid [4Fe-2O-2S] cluster is required as a cofactor.

The protein resides in the cytoplasm. It carries out the reaction A + NH4(+) + H2O = hydroxylamine + AH2 + H(+). Functionally, catalyzes the reduction of hydroxylamine to form NH(3) and H(2)O. This Acidithiobacillus ferridurans protein is Hydroxylamine reductase.